We begin with the raw amino-acid sequence, 322 residues long: Thioredoxin reductase (322 aa).

Residues 11 to 14, 40 to 41, glutamine 45, asparagine 54, valine 87, and cysteine 145 each bind FAD; these read SGPA and IA. A disulfide bond links cysteine 142 and cysteine 145. Serine 192 carries the post-translational modification Phosphoserine. At threonine 278 the chain carries Phosphothreonine. Serine 279 carries the post-translational modification Phosphoserine. Residues aspartate 288 and 295 to 297 each bind FAD; that span reads RQA.

This sequence belongs to the class-II pyridine nucleotide-disulfide oxidoreductase family. Homodimer. FAD serves as cofactor.

It is found in the cytoplasm. The catalysed reaction is [thioredoxin]-dithiol + NADP(+) = [thioredoxin]-disulfide + NADPH + H(+). This Schizosaccharomyces pombe (strain 972 / ATCC 24843) (Fission yeast) protein is Thioredoxin reductase (trr1).